We begin with the raw amino-acid sequence, 129 residues long: MTQMPQTNARVHAGRMAYHAGLSAEASVIREYESHGYVFEAQRWRGQVGEIDLVLRKSGLVVFVEVKKSKSFERAALRISPTQKRRIFATGEEFVAQEPQGLLTDMRFDVALVDAAGAVQILENALSEG.

The protein belongs to the UPF0102 family.

In Roseobacter denitrificans (strain ATCC 33942 / OCh 114) (Erythrobacter sp. (strain OCh 114)), this protein is UPF0102 protein RD1_1191.